The following is a 1242-amino-acid chain: DNA-directed RNA polymerase RPB2 homolog (1242 aa).

The C4-type zinc finger occupies 1180–1201 (CRNCGEPAIYNASHPIYKCMNC).

Belongs to the RNA polymerase beta chain family. In terms of assembly, part of the viral DNA-directed RNA polymerase that consists of 8 polII-like subunits (RPB1, RPB2, RPB3, RPB5, RPB6, RPB7, RPB9, RPB10), a capping enzyme and a termination factor.

It localises to the host cytoplasm. The protein localises to the virion. It catalyses the reaction RNA(n) + a ribonucleoside 5'-triphosphate = RNA(n+1) + diphosphate. Functionally, catalytic component of the DNA-directed RNA polymerase (RNAP) that catalyzes the transcription in the cytoplasm of viral DNA into RNA using the four ribonucleoside triphosphates as substrates. Forms the polymerase active center together with RPB1. Part of the core element with the central large cleft, the clamp element that moves to open and close the cleft and the jaws that are thought to grab the incoming DNA template. The polypeptide is DNA-directed RNA polymerase RPB2 homolog (African swine fever virus (isolate Pig/Kenya/KEN-50/1950) (ASFV)).